The primary structure comprises 328 residues: GTPase Obg 2 (328 aa).

Residues M1 to V139 enclose the Obg domain. The OBG-type G domain occupies S140–V309. GTP is bound by residues G146–S153, F171–E175, D192–G195, N259–D262, and G290–E292. Positions 153 and 173 each coordinate Mg(2+).

It belongs to the TRAFAC class OBG-HflX-like GTPase superfamily. OBG GTPase family. As to quaternary structure, monomer. It depends on Mg(2+) as a cofactor.

It is found in the cytoplasm. Functionally, an essential GTPase which binds GTP, GDP and possibly (p)ppGpp with moderate affinity, with high nucleotide exchange rates and a fairly low GTP hydrolysis rate. Plays a role in control of the cell cycle, stress response, ribosome biogenesis and in those bacteria that undergo differentiation, in morphogenesis control. This is GTPase Obg 2 from Anaplasma marginale (strain Florida).